We begin with the raw amino-acid sequence, 631 residues long: Glutamyl-tRNA(Gln) amidotransferase subunit E (631 aa).

This sequence belongs to the GatB/GatE family. GatE subfamily. In terms of assembly, heterodimer of GatD and GatE.

It catalyses the reaction L-glutamyl-tRNA(Gln) + L-glutamine + ATP + H2O = L-glutaminyl-tRNA(Gln) + L-glutamate + ADP + phosphate + H(+). Its function is as follows. Allows the formation of correctly charged Gln-tRNA(Gln) through the transamidation of misacylated Glu-tRNA(Gln) in organisms which lack glutaminyl-tRNA synthetase. The reaction takes place in the presence of glutamine and ATP through an activated gamma-phospho-Glu-tRNA(Gln). The GatDE system is specific for glutamate and does not act on aspartate. In Methanococcus maripaludis (strain C7 / ATCC BAA-1331), this protein is Glutamyl-tRNA(Gln) amidotransferase subunit E.